The sequence spans 321 residues: NADPH-dependent codeinone reductase 1-4 (321 aa).

NADPH contacts are provided by Thr-27 and Asp-51. Active-site proton donor residues include Tyr-56 and His-119. Substrate is bound at residue His-119. Residues Ser-165, Gln-187, Ser-214, Leu-216, Ser-264, and Arg-269 each contribute to the NADPH site. Positions 299-321 (SADFLLSPTGPFKTEEEFWDEKD) are disordered.

It belongs to the aldo/keto reductase family. Latex secreting cells (laticifer cells). Expressed constitutively in all organs with highest levels in capsules. Restricted to the parietal region of sieve elements adjacent or proximal to laticifers in roots, stems, leaves and carpels.

It is found in the cytoplasm. Its subcellular location is the cytosol. It carries out the reaction codeine + NADP(+) = codeinone + NADPH + H(+). The catalysed reaction is neopine + NADP(+) = neopinone + NADPH + H(+). It catalyses the reaction morphine + NADP(+) = morphinone + NADPH + H(+). The enzyme catalyses neomorphine + NADP(+) = neomorphinone + NADPH + H(+). Its pathway is alkaloid biosynthesis; morphine biosynthesis. NADPH-dependent codeinone reductase involved in biosynthesis of morphinan-type benzylisoquinoline and opiate alkaloids natural products. Reduces codeinone to codeine in the penultimate step in morphine biosynthesis. Can use morphinone, hydrocodone and hydromorphone as substrate during reductive reaction with NADPH as cofactor, and morphine and dihydrocodeine as substrate during oxidative reaction with NADP as cofactor. Converts morphinone to morphine, and neomorphinone to neomorphine. Reduces irreversibly neopinone, a spontaneous isomer of codeinone, to neopine; in planta, neopine levels are limited to low levels. This chain is NADPH-dependent codeinone reductase 1-4, found in Papaver somniferum (Opium poppy).